Reading from the N-terminus, the 417-residue chain is NADH-quinone oxidoreductase subunit D (417 aa).

This sequence belongs to the complex I 49 kDa subunit family. As to quaternary structure, NDH-1 is composed of 14 different subunits. Subunits NuoB, C, D, E, F, and G constitute the peripheral sector of the complex.

It localises to the cell inner membrane. The catalysed reaction is a quinone + NADH + 5 H(+)(in) = a quinol + NAD(+) + 4 H(+)(out). Its function is as follows. NDH-1 shuttles electrons from NADH, via FMN and iron-sulfur (Fe-S) centers, to quinones in the respiratory chain. The immediate electron acceptor for the enzyme in this species is believed to be ubiquinone. Couples the redox reaction to proton translocation (for every two electrons transferred, four hydrogen ions are translocated across the cytoplasmic membrane), and thus conserves the redox energy in a proton gradient. The protein is NADH-quinone oxidoreductase subunit D of Alkalilimnicola ehrlichii (strain ATCC BAA-1101 / DSM 17681 / MLHE-1).